We begin with the raw amino-acid sequence, 373 residues long: Lipoyl synthase (373 aa).

Positions histidine 12–isoleucine 36 are disordered. Residues cysteine 81, cysteine 86, cysteine 92, cysteine 107, cysteine 111, cysteine 114, and serine 323 each coordinate [4Fe-4S] cluster. The Radical SAM core domain maps to phenylalanine 93–serine 312. The segment at proline 346–arginine 373 is disordered.

Belongs to the radical SAM superfamily. Lipoyl synthase family. Requires [4Fe-4S] cluster as cofactor.

It is found in the cytoplasm. It carries out the reaction [[Fe-S] cluster scaffold protein carrying a second [4Fe-4S](2+) cluster] + N(6)-octanoyl-L-lysyl-[protein] + 2 oxidized [2Fe-2S]-[ferredoxin] + 2 S-adenosyl-L-methionine + 4 H(+) = [[Fe-S] cluster scaffold protein] + N(6)-[(R)-dihydrolipoyl]-L-lysyl-[protein] + 4 Fe(3+) + 2 hydrogen sulfide + 2 5'-deoxyadenosine + 2 L-methionine + 2 reduced [2Fe-2S]-[ferredoxin]. It participates in protein modification; protein lipoylation via endogenous pathway; protein N(6)-(lipoyl)lysine from octanoyl-[acyl-carrier-protein]: step 2/2. In terms of biological role, catalyzes the radical-mediated insertion of two sulfur atoms into the C-6 and C-8 positions of the octanoyl moiety bound to the lipoyl domains of lipoate-dependent enzymes, thereby converting the octanoylated domains into lipoylated derivatives. The sequence is that of Lipoyl synthase from Xylella fastidiosa (strain 9a5c).